Here is a 266-residue protein sequence, read N- to C-terminus: Respiratory nitrate reductase beta chain (266 aa).

4Fe-4S ferredoxin-type domains follow at residues 3–32 (VGMVLNLDKCIGCHTCSVTCKEGMEYAWFN) and 30–61 (WFNNVESKLCEHCLNPACVATCPSGAIYKREE). [4Fe-4S] cluster contacts are provided by Cys12, Cys15, Cys18, Cys22, Cys39, Cys42, and Cys47. 2 residues coordinate [3Fe-4S] cluster: Cys51 and Cys73. [4Fe-4S] cluster contacts are provided by Cys77, Cys81, Cys84, Cys96, and Cys100.

As to quaternary structure, heterotrimer composed of an alpha, a beta and a gamma chain. Alpha and beta are catalytic chains; gamma chains are involved in binding the enzyme complex to the cytoplasmic membrane. The cofactor is [4Fe-4S] cluster. [3Fe-4S] cluster is required as a cofactor.

It localises to the cell membrane. Its subcellular location is the cytoplasm. The catalysed reaction is nitrate + a quinol = a quinone + nitrite + H2O. Inhibited by micromolar concentrations of azide. Its function is as follows. The nitrate reductase enzyme complex allows Bradyrhizobium sp. USDA 3045 to use nitrate as an electron acceptor during anaerobic growth. The beta chain is an electron transfer unit containing four cysteine clusters involved in the formation of iron-sulfur centers. Electrons are transferred from the gamma chain to the molybdenum cofactor of the alpha subunit. In Bradyrhizobium sp, this protein is Respiratory nitrate reductase beta chain (narH).